The chain runs to 319 residues: Beta-ketoacyl-[acyl-carrier-protein] synthase III (319 aa).

Active-site residues include Cys-112 and His-246. An ACP-binding region spans residues 247-251; the sequence is QANFR. Asn-276 is an active-site residue.

The protein belongs to the thiolase-like superfamily. FabH family. As to quaternary structure, homodimer.

Its subcellular location is the cytoplasm. The enzyme catalyses malonyl-[ACP] + acetyl-CoA + H(+) = 3-oxobutanoyl-[ACP] + CO2 + CoA. The protein operates within lipid metabolism; fatty acid biosynthesis. Its function is as follows. Catalyzes the condensation reaction of fatty acid synthesis by the addition to an acyl acceptor of two carbons from malonyl-ACP. Catalyzes the first condensation reaction which initiates fatty acid synthesis and may therefore play a role in governing the total rate of fatty acid production. Possesses both acetoacetyl-ACP synthase and acetyl transacylase activities. Its substrate specificity determines the biosynthesis of branched-chain and/or straight-chain of fatty acids. The protein is Beta-ketoacyl-[acyl-carrier-protein] synthase III of Pseudoalteromonas atlantica (strain T6c / ATCC BAA-1087).